The primary structure comprises 252 residues: Ubiquinone/menaquinone biosynthesis C-methyltransferase UbiE (252 aa).

S-adenosyl-L-methionine-binding positions include T75, D96, and 123-124 (NA).

It belongs to the class I-like SAM-binding methyltransferase superfamily. MenG/UbiE family.

It catalyses the reaction a 2-demethylmenaquinol + S-adenosyl-L-methionine = a menaquinol + S-adenosyl-L-homocysteine + H(+). The enzyme catalyses a 2-methoxy-6-(all-trans-polyprenyl)benzene-1,4-diol + S-adenosyl-L-methionine = a 5-methoxy-2-methyl-3-(all-trans-polyprenyl)benzene-1,4-diol + S-adenosyl-L-homocysteine + H(+). It participates in quinol/quinone metabolism; menaquinone biosynthesis; menaquinol from 1,4-dihydroxy-2-naphthoate: step 2/2. It functions in the pathway cofactor biosynthesis; ubiquinone biosynthesis. In terms of biological role, methyltransferase required for the conversion of demethylmenaquinol (DMKH2) to menaquinol (MKH2) and the conversion of 2-polyprenyl-6-methoxy-1,4-benzoquinol (DDMQH2) to 2-polyprenyl-3-methyl-6-methoxy-1,4-benzoquinol (DMQH2). The sequence is that of Ubiquinone/menaquinone biosynthesis C-methyltransferase UbiE from Methylobacterium nodulans (strain LMG 21967 / CNCM I-2342 / ORS 2060).